A 432-amino-acid polypeptide reads, in one-letter code: Trigger factor (432 aa).

The 86-residue stretch at 161-246 (EDRVTIDFTG…LKKVEERELP (86 aa)) folds into the PPIase FKBP-type domain.

It belongs to the FKBP-type PPIase family. Tig subfamily. In terms of assembly, homodimer and monomer. In vivo most of the ribosomes are in complex with monomeric TF. Uncomplexed TF, however, is in a monomer-dimer equilibrium with approximately two thirds of TF existing in a dimeric state.

Its subcellular location is the cytoplasm. It carries out the reaction [protein]-peptidylproline (omega=180) = [protein]-peptidylproline (omega=0). Involved in protein export. Acts as a chaperone by maintaining the newly synthesized protein in an open conformation. Functions as a peptidyl-prolyl cis-trans isomerase. This is Trigger factor from Escherichia coli O127:H6 (strain E2348/69 / EPEC).